We begin with the raw amino-acid sequence, 719 residues long: Protein psiJ (719 aa).

Residues 1 to 21 form the signal peptide; the sequence is MVSNLLKGLILFSLFISFLNG. The Extracellular segment spans residues 22–653; that stretch reads DDKIFPVTIR…RCQSVAVKAG (632 aa). 10 N-linked (GlcNAc...) asparagine glycosylation sites follow: Asn-46, Asn-59, Asn-86, Asn-113, Asn-301, Asn-372, Asn-435, Asn-457, Asn-562, and Asn-628. The PA14 domain maps to 112 to 260; that stretch reads QNQTDPRVFY…KDYCGVCEGT (149 aa). A helical transmembrane segment spans residues 654-674; sequence VIGGAAIAGVVVGGAVALGLA. Over 675–719 the chain is Cytoplasmic; that stretch reads LFGAKAGYNHWMSLKNNQMATSSVNPLYEPSPHQGTNPLWEAPPT.

It belongs to the prespore-cell-inducing factor family.

It is found in the membrane. In Dictyostelium discoideum (Social amoeba), this protein is Protein psiJ (psiJ).